Here is a 164-residue protein sequence, read N- to C-terminus: Peptide deformylase (164 aa).

Cysteine 87 and histidine 129 together coordinate Fe cation. Glutamate 130 is an active-site residue. Histidine 133 contacts Fe cation.

Belongs to the polypeptide deformylase family. It depends on Fe(2+) as a cofactor.

The catalysed reaction is N-terminal N-formyl-L-methionyl-[peptide] + H2O = N-terminal L-methionyl-[peptide] + formate. Removes the formyl group from the N-terminal Met of newly synthesized proteins. Requires at least a dipeptide for an efficient rate of reaction. N-terminal L-methionine is a prerequisite for activity but the enzyme has broad specificity at other positions. This chain is Peptide deformylase, found in Thermotoga sp. (strain RQ2).